Consider the following 96-residue polypeptide: Protein RnfH (96 aa).

It belongs to the UPF0125 (RnfH) family.

The polypeptide is Protein RnfH (Klebsiella pneumoniae (strain 342)).